The following is a 219-amino-acid chain: Response regulator ArlR (219 aa).

Positions 3 to 116 constitute a Response regulatory domain; it reads QILIVEDEQN…ELLARIRAIL (114 aa). 4-aspartylphosphate is present on Asp52. The segment at residues 122–219 is a DNA-binding region (ompR/PhoB-type); the sequence is KDIIDVNGIT…TVRGVGYVIR (98 aa).

Post-translationally, phosphorylated by ArlS.

The protein localises to the cytoplasm. In terms of biological role, member of the two-component regulatory system ArlS/ArlR involved in the regulation of adhesion, autolysis, multidrug resistance and virulence. The sequence is that of Response regulator ArlR (arlR) from Staphylococcus aureus (strain USA300).